A 735-amino-acid chain; its full sequence is Transcription initiation factor IIF subunit alpha (735 aa).

6 disordered regions span residues 1-68 (MSRR…EYAE), 165-263 (EYKK…TANL), 297-323 (NEPEFEEGTMDPLADVAPDGGGRAKRG), 446-465 (KAVADQQAMDEDDRDDNSEV), 471-606 (EEFA…HKEP), and 631-674 (PEGE…EETP). Positions 33–54 (RMRMGQNGSNSSSPGVPNGDNS) are enriched in low complexity. 2 stretches are compositionally biased toward basic and acidic residues: residues 59–68 (VKKDDPEYAE) and 165–174 (EYKKKAEQER). Residues 175 to 219 (STPNSGGMNKSGTVSLNNTVKDGSQTPTVDSVTKDNTANGVNSSI) show a composition bias toward polar residues. Ser-198 carries the phosphoserine modification. Thr-200 is modified (phosphothreonine). The segment covering 220-238 (PTVTGSSVPPASPTTVSAV) has biased composition (low complexity). Over residues 239–263 (ESNGLSNGSTSAANGLDGNASTANL) the composition is skewed to polar residues. Composition is skewed to acidic residues over residues 453-465 (AMDEDDRDDNSEV) and 471-480 (EEFADDEEAP). Residues 487 to 500 (QENKESEQRIKKEM) show a composition bias toward basic and acidic residues. Acidic residues predominate over residues 513–522 (APSENEEDEL). Ser-515 bears the Phosphoserine mark. The span at 523–536 (FGEKKIDEDGERIK) shows a compositional bias: basic and acidic residues. Ser-560, Ser-562, and Ser-571 each carry phosphoserine. Positions 564–583 (IENKENESPVKKEEDSDTLS) are enriched in basic and acidic residues. A compositionally biased stretch (basic residues) spans 584–595 (KSKRSSPKKQQK). The span at 636–654 (NPQTTKAVDSSNNASNTVP) shows a compositional bias: polar residues. Ser-655 carries the post-translational modification Phosphoserine.

The protein belongs to the TFIIF alpha subunit family. In terms of assembly, TFIIF is composed of three different subunits: TFG1/RAP74, TFG2/RAP30 and TAF14. Post-translationally, phosphorylated on Ser and other residues by TAF1 and casein kinase II-like kinases.

Its subcellular location is the nucleus. Functionally, TFIIF is a general transcription initiation factor that binds to RNA polymerase II. Its functions include the recruitment of RNA polymerase II to the promoter bound DNA-TBP-TFIIB complex, decreasing the affinity of RNA polymerase II for non-specific DNA, allowing for the subsequent recruitment of TFIIE and TFIIH, and facilitating RNA polymerase II elongation. The chain is Transcription initiation factor IIF subunit alpha (TFG1) from Saccharomyces cerevisiae (strain ATCC 204508 / S288c) (Baker's yeast).